A 343-amino-acid chain; its full sequence is Stimulator of interferon genes protein homolog (343 aa).

N-linked (GlcNAc...) asparagine glycosylation occurs at Asn84. The next 2 membrane-spanning stretches (helical) occupy residues 87–107 (IYLI…TGNY) and 109–129 (NVMP…WSFT). Asn157 contributes to the 3',2'-cGAMP binding site. Asn187 carries an N-linked (GlcNAc...) asparagine glycan. A helical transmembrane segment spans residues 195-215 (LVILIPDEMFVNGVLESHLLD). The 3',2'-cGAMP site is built by Arg232, Lys235, Glu255, Thr258, and Ser262. N-linked (GlcNAc...) asparagine glycosylation is found at Asn270 and Asn333.

This sequence belongs to the STING family.

The protein resides in the endoplasmic reticulum membrane. Functionally, facilitator of innate immune signaling that binds cyclic dinucleotides produced in response to infection by bacteria and/or viruses, and promotes the activation of the NF-kappa-B transcription factor Rel (Relish). Recognizes and binds cyclic di-GMP (c-di-GMP), a cyclic dinucleotide messenger produced by bacteria such as L.monocytogenes, leading to activation of the peptidoglycan recognition protein (IMD) signaling pathway and activation of Rel (Relish). Innate immune response is triggered in response to double-stranded RNA from viruses delivered to the cytoplasm: Sting acts by specifically binding cyclic dinucleotides 3',2'-cGAMP and 2',3'-cGAMP produced by cGlr1 and cGlr2 in response to RNA virus in the cytosol. Has a strong preference for 3',2'-cGAMP compared to other cyclic dinucleotides such as 2',3'-cGAMP or 3'3'-c-di-GMP. Upon binding to 3',2'-cGAMP, activates an antiviral immune response, leading to the activation of Rel (Relish). Activated in brain in response to Zika virus infection, leading to autophagy. The protein is Stimulator of interferon genes protein homolog of Drosophila melanogaster (Fruit fly).